A 277-amino-acid chain; its full sequence is Bifunctional protein FolD (277 aa).

NADP(+)-binding positions include 160–162, S185, and I226; that span reads GAS.

It belongs to the tetrahydrofolate dehydrogenase/cyclohydrolase family. In terms of assembly, homodimer.

The catalysed reaction is (6R)-5,10-methylene-5,6,7,8-tetrahydrofolate + NADP(+) = (6R)-5,10-methenyltetrahydrofolate + NADPH. It carries out the reaction (6R)-5,10-methenyltetrahydrofolate + H2O = (6R)-10-formyltetrahydrofolate + H(+). Its pathway is one-carbon metabolism; tetrahydrofolate interconversion. Catalyzes the oxidation of 5,10-methylenetetrahydrofolate to 5,10-methenyltetrahydrofolate and then the hydrolysis of 5,10-methenyltetrahydrofolate to 10-formyltetrahydrofolate. The chain is Bifunctional protein FolD from Vesicomyosocius okutanii subsp. Calyptogena okutanii (strain HA).